A 280-amino-acid polypeptide reads, in one-letter code: MKLCHFEAGLDQPLFLISGPCVIESEQLAMDTAGQLKEMCAGLGIPFIYKSSFDKANRSSTKSFRGLGLEEGLRILADVKAKIGVPVLTDVHEDTPLDEVAAVVDVLQTPAFLCRQTNFIQNVARAGRPVNIKKGQFLAPWDMQNVVDKAREVGNDQIMVCERGVSFGYNTLVSDMRGLAIMRGTGCPVVFDATHSVQQPGGQGATSGGQREFVPVLARAAVASGVAGVFAETHPDPACALSDGPNAWPLGMMRELLETLKEIDALVKQRGFIEHKLMKA.

This sequence belongs to the KdsA family.

It localises to the cytoplasm. The enzyme catalyses D-arabinose 5-phosphate + phosphoenolpyruvate + H2O = 3-deoxy-alpha-D-manno-2-octulosonate-8-phosphate + phosphate. It participates in carbohydrate biosynthesis; 3-deoxy-D-manno-octulosonate biosynthesis; 3-deoxy-D-manno-octulosonate from D-ribulose 5-phosphate: step 2/3. Its pathway is bacterial outer membrane biogenesis; lipopolysaccharide biosynthesis. The polypeptide is 2-dehydro-3-deoxyphosphooctonate aldolase (Thiobacillus denitrificans (strain ATCC 25259 / T1)).